A 477-amino-acid chain; its full sequence is MTSPDTQTSSLYAKREPVFPKRVSGKFRSLKWWIMGVTLGIYYIAPWLRWDRGPNLPDQAILVDLANRRFFFFMIEIWPHEFYFVAGLLIMAGLGLFLFTSAAGRVWCGYACPQTVWTDLFILVERWVEGDRNARIRLLRQRWDLEKTRKYLTKWTLWLLIGLATGGAWVFYFTDAPTLLVDLLTGNAHPVAYITMATLTATTFAFGGFAREQICIYACPWPRIQAAMMDEETITVAYREWRGEPRGKLKKGEPLSPDQGDCIDCMACVNVCPMGIDIRDGQQLACITCALCIDACDEVMDKIGKPRGLIGYLALTDERAEREGRSPRSAWRHVFRLRTLIYTALWSGVGLALIVALFLRSPIDINVTPLRNPLYVTLSDGSIRNTYDVRLRNKQGEARDYQISVTSEADLALSLEGHPATVVTVPANETMTQRVYIIAGKGTPAAEAERTDLRLWVEDLAAGQRVHHDTIFNGRGN.

Residues 1–29 are Cytoplasmic-facing; it reads MTSPDTQTSSLYAKREPVFPKRVSGKFRS. The chain crosses the membrane as a helical span at residues 30-50; it reads LKWWIMGVTLGIYYIAPWLRW. Residues 51–81 are Periplasmic-facing; sequence DRGPNLPDQAILVDLANRRFFFFMIEIWPHE. The chain crosses the membrane as a helical span at residues 82 to 102; that stretch reads FYFVAGLLIMAGLGLFLFTSA. The Cytoplasmic portion of the chain corresponds to 103–154; the sequence is AGRVWCGYACPQTVWTDLFILVERWVEGDRNARIRLLRQRWDLEKTRKYLTK. A helical transmembrane segment spans residues 155–175; sequence WTLWLLIGLATGGAWVFYFTD. Residues 176–189 lie on the Periplasmic side of the membrane; sequence APTLLVDLLTGNAH. Residues 190–210 form a helical membrane-spanning segment; sequence PVAYITMATLTATTFAFGGFA. Residues 211–338 are Cytoplasmic-facing; that stretch reads REQICIYACP…SAWRHVFRLR (128 aa). Residues 253 to 281 enclose the 4Fe-4S ferredoxin-type domain; the sequence is EPLSPDQGDCIDCMACVNVCPMGIDIRDG. 8 residues coordinate [4Fe-4S] cluster: C262, C265, C268, C272, C286, C289, C292, and C296. Residues 339–359 traverse the membrane as a helical segment; it reads TLIYTALWSGVGLALIVALFL. At 360–477 the chain is on the periplasmic side; sequence RSPIDINVTP…HDTIFNGRGN (118 aa).

It depends on [4Fe-4S] cluster as a cofactor.

The protein localises to the cell membrane. In terms of biological role, involved in a membrane generated redox signal; required to maintain repression of photosynthesis gene expression in the presence of oxygen. In Cereibacter sphaeroides (strain ATCC 17023 / DSM 158 / JCM 6121 / CCUG 31486 / LMG 2827 / NBRC 12203 / NCIMB 8253 / ATH 2.4.1.) (Rhodobacter sphaeroides), this protein is Protein RdxB (rdxB).